Here is a 289-residue protein sequence, read N- to C-terminus: Acetyl-coenzyme A carboxylase carboxyl transferase subunit beta (289 aa).

The region spanning 28 to 289 is the CoA carboxyltransferase N-terminal domain; it reads VMTKCPECKK…QGGGMAVWQS (262 aa). Zn(2+)-binding residues include C32, C35, C51, and C54. A C4-type zinc finger spans residues 32 to 54; the sequence is CPECKKIMYTKELLKNLKVCVNC.

It belongs to the AccD/PCCB family. As to quaternary structure, acetyl-CoA carboxylase is a heterohexamer composed of biotin carboxyl carrier protein (AccB), biotin carboxylase (AccC) and two subunits each of ACCase subunit alpha (AccA) and ACCase subunit beta (AccD). Zn(2+) is required as a cofactor.

It is found in the cytoplasm. The catalysed reaction is N(6)-carboxybiotinyl-L-lysyl-[protein] + acetyl-CoA = N(6)-biotinyl-L-lysyl-[protein] + malonyl-CoA. It functions in the pathway lipid metabolism; malonyl-CoA biosynthesis; malonyl-CoA from acetyl-CoA: step 1/1. Functionally, component of the acetyl coenzyme A carboxylase (ACC) complex. Biotin carboxylase (BC) catalyzes the carboxylation of biotin on its carrier protein (BCCP) and then the CO(2) group is transferred by the transcarboxylase to acetyl-CoA to form malonyl-CoA. This is Acetyl-coenzyme A carboxylase carboxyl transferase subunit beta from Bacillus cereus (strain G9842).